Here is a 250-residue protein sequence, read N- to C-terminus: Urease accessory protein UreD (250 aa).

It belongs to the UreD family. UreD, UreF and UreG form a complex that acts as a GTP-hydrolysis-dependent molecular chaperone, activating the urease apoprotein by helping to assemble the nickel containing metallocenter of UreC. The UreE protein probably delivers the nickel.

It is found in the cytoplasm. In terms of biological role, required for maturation of urease via the functional incorporation of the urease nickel metallocenter. The chain is Urease accessory protein UreD from Aliarcobacter butzleri (strain RM4018) (Arcobacter butzleri).